The following is a 283-amino-acid chain: Probable protein phosphatase 2C 17 (283 aa).

In terms of domain architecture, PPM-type phosphatase spans 32–282 (KYGFSLIKGK…DDISCIVVRF (251 aa)). The Mn(2+) site is built by aspartate 69, glycine 70, aspartate 234, and aspartate 273.

This sequence belongs to the PP2C family. It depends on Mg(2+) as a cofactor. Requires Mn(2+) as cofactor.

The enzyme catalyses O-phospho-L-seryl-[protein] + H2O = L-seryl-[protein] + phosphate. The catalysed reaction is O-phospho-L-threonyl-[protein] + H2O = L-threonyl-[protein] + phosphate. This chain is Probable protein phosphatase 2C 17, found in Arabidopsis thaliana (Mouse-ear cress).